Here is a 179-residue protein sequence, read N- to C-terminus: Transcriptional repressor NrdR (179 aa).

A zinc finger spans residues 3-34 (CPYCQHTNSRVLESRSSEGGQSIRRRRECLCC). In terms of domain architecture, ATP-cone spans 49 to 139 (ITVIKHDGKK…VYGRFQGIKD (91 aa)). The interval 160–179 (KPANDDFSEQETPSTVMMPS) is disordered. Residues 169–179 (QETPSTVMMPS) show a composition bias toward polar residues.

This sequence belongs to the NrdR family. Requires Zn(2+) as cofactor.

Functionally, negatively regulates transcription of bacterial ribonucleotide reductase nrd genes and operons by binding to NrdR-boxes. The chain is Transcriptional repressor NrdR from Rippkaea orientalis (strain PCC 8801 / RF-1) (Cyanothece sp. (strain PCC 8801)).